Here is a 121-residue protein sequence, read N- to C-terminus: Ribonuclease P protein component (121 aa).

This sequence belongs to the RnpA family. As to quaternary structure, consists of a catalytic RNA component (M1 or rnpB) and a protein subunit.

The catalysed reaction is Endonucleolytic cleavage of RNA, removing 5'-extranucleotides from tRNA precursor.. RNaseP catalyzes the removal of the 5'-leader sequence from pre-tRNA to produce the mature 5'-terminus. It can also cleave other RNA substrates such as 4.5S RNA. The protein component plays an auxiliary but essential role in vivo by binding to the 5'-leader sequence and broadening the substrate specificity of the ribozyme. The chain is Ribonuclease P protein component from Neisseria gonorrhoeae (strain ATCC 700825 / FA 1090).